We begin with the raw amino-acid sequence, 509 residues long: 2,3-bisphosphoglycerate-independent phosphoglycerate mutase (509 aa).

Asp-11 is a binding site for Mn(2+). Tyr-35 is subject to Phosphotyrosine. Position 61 (Ser-61) interacts with Mn(2+). The active-site Phosphoserine intermediate is the Ser-61. Substrate is bound by residues His-122, Arg-152–Asp-153, Arg-184, Arg-190, Arg-260–Arg-263, and Lys-335. Positions 402, 406, 443, 444, and 461 each coordinate Mn(2+).

The protein belongs to the BPG-independent phosphoglycerate mutase family. As to quaternary structure, monomer. Mn(2+) serves as cofactor.

It catalyses the reaction (2R)-2-phosphoglycerate = (2R)-3-phosphoglycerate. The protein operates within carbohydrate degradation; glycolysis; pyruvate from D-glyceraldehyde 3-phosphate: step 3/5. Its function is as follows. Essential for rapid growth and for sporulation. Catalyzes the interconversion of 2-phosphoglycerate and 3-phosphoglycerate. This chain is 2,3-bisphosphoglycerate-independent phosphoglycerate mutase, found in Bacillus cereus (strain ATCC 10987 / NRS 248).